Consider the following 292-residue polypeptide: MHSDAAAVNFQLNSHLSTLANIHKIYHTLNKLNLTEDIGQDDHQTGSLRSCSSSDCFNKVMPPRKKRRPASGDDLSAKKSRHDSMYRKYDSTRIKTEEEAFSSKRCLEWFYEYAGTDDVVGPEGMEKFCEDIGVEPENVVMLVLAWKLDAQNMGYFTLQEWLKGMTSLQCDTTEKLRNTLDYLRSFLNDSTNFKLIYRYAFDFAREKDQRSLDINTAKCMLGLLLGKIWPLFPVFHQFLEQSKYKVINKDQWCNVLEFSRTINLDLSNYDEDGAWPVLLDEFVEWYKDKQMS.

The segment at 43–83 (HQTGSLRSCSSSDCFNKVMPPRKKRRPASGDDLSAKKSRHD) is disordered. Residues 45-56 (TGSLRSCSSSDC) show a composition bias toward polar residues. Residue Lys95 forms a Glycyl lysine isopeptide (Lys-Gly) (interchain with G-Cter in SUMO2) linkage. A DCUN1 domain is found at 101 to 287 (FSSKRCLEWF…LLDEFVEWYK (187 aa)).

In terms of assembly, interacts (via the DCUN1 domain) with the unneddylated cullins: interacts with CUL1, CUL2, CUL3, CUL4A, CUL4B and CUL5; these interactions promote the cullin neddylation and the identity of the cullin dictates the affinity of the interaction. Interacts with RBX1 and RNF7. Interacts with CAND1; this interaction is bridged by cullins such as CUL3 and strongly inhibits the neddylation of CUL3. These CAND-cullin-DCNL complexes can only be neddylated in the presence of a substrate adapter. Interacts (via DCUN1 domain) with UBE2M (N-terminally acetylated form) and probably with UBE2F (N-terminally acetylated form).

It localises to the nucleus. Its function is as follows. Contributes to the neddylation of all cullins by transferring NEDD8 from N-terminally acetylated NEDD8-conjugating E2s enzyme to different cullin C-terminal domain-RBX complexes which are necessary for the activation of cullin-RING E3 ubiquitin ligases (CRLs). The polypeptide is DCN1-like protein 4 (Homo sapiens (Human)).